Consider the following 492-residue polypeptide: N-succinylglutamate 5-semialdehyde dehydrogenase (492 aa).

220 to 225 is an NAD(+) binding site; it reads GSANTG. Catalysis depends on residues glutamate 243 and cysteine 277.

The protein belongs to the aldehyde dehydrogenase family. AstD subfamily.

The enzyme catalyses N-succinyl-L-glutamate 5-semialdehyde + NAD(+) + H2O = N-succinyl-L-glutamate + NADH + 2 H(+). It functions in the pathway amino-acid degradation; L-arginine degradation via AST pathway; L-glutamate and succinate from L-arginine: step 4/5. Functionally, catalyzes the NAD-dependent reduction of succinylglutamate semialdehyde into succinylglutamate. The protein is N-succinylglutamate 5-semialdehyde dehydrogenase of Escherichia coli O9:H4 (strain HS).